Reading from the N-terminus, the 123-residue chain is SGSCEVKTCWWAQPDFRVIGDYLKDKYDSASEMVVEKHRESRGWVETLRAKYELFKPPTERDLVYYENSPNFCEPNAETGSFGTRDRICNVTSHGIDGCDLLCCGRGHNTRTEKRKEKCHCIF.

Serine 1 carries the O-palmitoleoyl serine; by PORCN lipid modification. Residues cysteine 89 and cysteine 104 are joined by a disulfide bond. Asparagine 90 is a glycosylation site (N-linked (GlcNAc...) asparagine).

The protein belongs to the Wnt family. In terms of processing, palmitoleoylation is required for efficient binding to frizzled receptors. Depalmitoleoylation leads to Wnt signaling pathway inhibition.

The protein resides in the secreted. The protein localises to the extracellular space. Its subcellular location is the extracellular matrix. Its function is as follows. Ligand for members of the frizzled family of seven transmembrane receptors. Probable developmental protein. May be a signaling molecule which affects the development of discrete regions of tissues. Is likely to signal over only few cell diameters. The polypeptide is Protein Wnt-3b (WNT-3B) (Alopias vulpinus (Common thresher shark)).